Consider the following 212-residue polypeptide: Large ribosomal subunit protein uL3 (212 aa).

Position 152 is an N5-methylglutamine (Q152).

Belongs to the universal ribosomal protein uL3 family. In terms of assembly, part of the 50S ribosomal subunit. Forms a cluster with proteins L14 and L19. In terms of processing, methylated by PrmB.

Its function is as follows. One of the primary rRNA binding proteins, it binds directly near the 3'-end of the 23S rRNA, where it nucleates assembly of the 50S subunit. This is Large ribosomal subunit protein uL3 from Marinomonas sp. (strain MWYL1).